Here is a 345-residue protein sequence, read N- to C-terminus: Probable translocation protein y4yO (345 aa).

Over residues 1–22 the composition is skewed to basic and acidic residues; that stretch reads MSDTSEEKSHGATPKKLSDARK. The segment at 1–25 is disordered; that stretch reads MSDTSEEKSHGATPKKLSDARKRGQ. Transmembrane regions (helical) follow at residues 87–107, 151–171, and 189–209; these read LATV…AALL, VLVL…TMVY, and QLIG…LLLQ.

Belongs to the type III secretion exporter family.

Its subcellular location is the cell membrane. Functionally, could be involved in the secretion of an unknown factor. In Sinorhizobium fredii (strain NBRC 101917 / NGR234), this protein is Probable translocation protein y4yO.